The chain runs to 794 residues: Phosphoribosylformylglycinamidine synthase subunit PurL (794 aa).

His47 is a catalytic residue. The ATP site is built by Tyr50 and Lys89. Glu91 is a Mg(2+) binding site. Residues 92-95 and Arg114 each bind substrate; that span reads SHNH. Residue His93 is the Proton acceptor of the active site. Asp115 provides a ligand contact to Mg(2+). Gln238 contributes to the substrate binding site. Mg(2+) is bound at residue Asp266. Substrate is bound at residue 310-312; that stretch reads ESQ. ATP-binding residues include Asp522 and Gly559. Asn560 contributes to the Mg(2+) binding site. Ser562 contributes to the substrate binding site.

It belongs to the FGAMS family. Monomer. Part of the FGAM synthase complex composed of 1 PurL, 1 PurQ and 2 PurS subunits.

It localises to the cytoplasm. The catalysed reaction is N(2)-formyl-N(1)-(5-phospho-beta-D-ribosyl)glycinamide + L-glutamine + ATP + H2O = 2-formamido-N(1)-(5-O-phospho-beta-D-ribosyl)acetamidine + L-glutamate + ADP + phosphate + H(+). Its pathway is purine metabolism; IMP biosynthesis via de novo pathway; 5-amino-1-(5-phospho-D-ribosyl)imidazole from N(2)-formyl-N(1)-(5-phospho-D-ribosyl)glycinamide: step 1/2. Its function is as follows. Part of the phosphoribosylformylglycinamidine synthase complex involved in the purines biosynthetic pathway. Catalyzes the ATP-dependent conversion of formylglycinamide ribonucleotide (FGAR) and glutamine to yield formylglycinamidine ribonucleotide (FGAM) and glutamate. The FGAM synthase complex is composed of three subunits. PurQ produces an ammonia molecule by converting glutamine to glutamate. PurL transfers the ammonia molecule to FGAR to form FGAM in an ATP-dependent manner. PurS interacts with PurQ and PurL and is thought to assist in the transfer of the ammonia molecule from PurQ to PurL. The sequence is that of Phosphoribosylformylglycinamidine synthase subunit PurL from Prochlorococcus marinus (strain MIT 9303).